Reading from the N-terminus, the 234-residue chain is 2,3-bisphosphoglycerate-dependent phosphoglycerate mutase (234 aa).

Substrate contacts are provided by residues 8–15 (RHGESVWN), 21–22 (TG), Arg-60, 87–90 (ERHY), Lys-98, 114–115 (RR), and 183–184 (GN). Catalysis depends on His-9, which acts as the Tele-phosphohistidine intermediate. The Proton donor/acceptor role is filled by Glu-87.

Belongs to the phosphoglycerate mutase family. BPG-dependent PGAM subfamily. Homodimer.

The catalysed reaction is (2R)-2-phosphoglycerate = (2R)-3-phosphoglycerate. It participates in carbohydrate degradation; glycolysis; pyruvate from D-glyceraldehyde 3-phosphate: step 3/5. In terms of biological role, catalyzes the interconversion of 2-phosphoglycerate and 3-phosphoglycerate. In Geobacter sp. (strain M21), this protein is 2,3-bisphosphoglycerate-dependent phosphoglycerate mutase.